A 583-amino-acid chain; its full sequence is Capsid vertex component 2 (583 aa).

Residues 1 to 49 (MANFIWDARILTGDGMEMFPADVKNFIAPPWPIEFWKEPVFTSNRANME) form an interaction with major capsid protein/MCP region.

This sequence belongs to the herpesviridae CVC2 protein family. In terms of assembly, heterodimerizes with CVC1. Interacts with major capsid protein/MCP and triplex capsid protein 1/TRX1 at the pentamer vertices. Interacts with the large tegument protein/LTP.

The protein localises to the virion. It is found in the host nucleus. Its function is as follows. Capsid vertex-specific component that plays a role during viral DNA encapsidation, assuring correct genome cleavage and presumably stabilizing capsids that contain full-length viral genomes. Participates in the interaction between the capsid and the tegument through interaction with the large tegument protein/LTP. The protein is Capsid vertex component 2 of Gallus gallus (Chicken).